A 117-amino-acid polypeptide reads, in one-letter code: UPF0122 protein Teth39_1278 (117 aa).

The protein belongs to the UPF0122 family.

Functionally, might take part in the signal recognition particle (SRP) pathway. This is inferred from the conservation of its genetic proximity to ftsY/ffh. May be a regulatory protein. This Thermoanaerobacter pseudethanolicus (strain ATCC 33223 / 39E) (Clostridium thermohydrosulfuricum) protein is UPF0122 protein Teth39_1278.